The primary structure comprises 101 residues: MDKTKRLFLKSKRSFRRRLPPIQSGDRIDYRNMTLISRFLSEQGKILSRRVNRLTLKEQRLITIAIKQARILSSLPFLNNEKQFERSGLTARPPGLRTRKK.

This sequence belongs to the bacterial ribosomal protein bS18 family. As to quaternary structure, part of the 30S ribosomal subunit.

The protein resides in the plastid. The protein localises to the chloroplast. The polypeptide is Small ribosomal subunit protein bS18c (Citrus sinensis (Sweet orange)).